We begin with the raw amino-acid sequence, 147 residues long: Histone H2B (147 aa).

Residues 1-31 (MAPKAEKKPAEKKPAEEKKAVAEKAPAEKKP) show a composition bias toward basic and acidic residues. Residues 1 to 55 (MAPKAEKKPAEKKPAEEKKAVAEKAPAEKKPKAGKKLPKEGGAAAGDKKKKRVKK) form a disordered region. An N6-acetyllysine mark is found at K7, K35, and K36. Residue K143 forms a Glycyl lysine isopeptide (Lys-Gly) (interchain with G-Cter in ubiquitin) linkage.

Belongs to the histone H2B family. In terms of assembly, the nucleosome is a histone octamer containing two molecules each of H2A, H2B, H3 and H4 assembled in one H3-H4 heterotetramer and two H2A-H2B heterodimers. The octamer wraps approximately 147 bp of DNA. Can be acetylated to form H2BK6ac, H2BK33ac and H2BK34ac. In terms of processing, monoubiquitinated to form H2BK143ub1; may give a specific tag for epigenetic transcriptional activation.

The protein resides in the nucleus. Its subcellular location is the chromosome. In terms of biological role, core component of nucleosome. Nucleosomes wrap and compact DNA into chromatin, limiting DNA accessibility to the cellular machineries which require DNA as a template. Histones thereby play a central role in transcription regulation, DNA repair, DNA replication and chromosomal stability. DNA accessibility is regulated via a complex set of post-translational modifications of histones, also called histone code, and nucleosome remodeling. This chain is Histone H2B (HIS2B), found in Gossypium hirsutum (Upland cotton).